The sequence spans 127 residues: MARIAGIDLPPNKRAVISLQYIYGIGNKSAQDIIAAAGIDPTTRTKDLTEEQARKIREIIEASYKVEGDLRREVTMNIKRLMDLGCYRGLRHRKGLPVRGQRTHTNARTRKGPKRGIVRAKPAAPAR.

Over residues 96–118 (LPVRGQRTHTNARTRKGPKRGIV) the composition is skewed to basic residues. Residues 96–127 (LPVRGQRTHTNARTRKGPKRGIVRAKPAAPAR) form a disordered region.

The protein belongs to the universal ribosomal protein uS13 family. As to quaternary structure, part of the 30S ribosomal subunit. Forms a loose heterodimer with protein S19. Forms two bridges to the 50S subunit in the 70S ribosome.

Located at the top of the head of the 30S subunit, it contacts several helices of the 16S rRNA. In the 70S ribosome it contacts the 23S rRNA (bridge B1a) and protein L5 of the 50S subunit (bridge B1b), connecting the 2 subunits; these bridges are implicated in subunit movement. Contacts the tRNAs in the A and P-sites. This Myxococcus xanthus (strain DK1622) protein is Small ribosomal subunit protein uS13.